Consider the following 402-residue polypeptide: Type II NADH:quinone oxidoreductase (402 aa).

FAD is bound by residues 12–16 (GAGYA), 39–40 (NK), and Val83. Glu172 is an active-site residue. FAD contacts are provided by residues Asp302, 319–320 (AQ), and Lys379.

This sequence belongs to the NADH dehydrogenase family. In terms of assembly, homodimer in solution. Forms homotetramers; dimer of dimers. FAD is required as a cofactor.

It is found in the cell membrane. It carries out the reaction a quinone + NADH + H(+) = a quinol + NAD(+). The catalysed reaction is a menaquinone + NADH + H(+) = a menaquinol + NAD(+). It catalyses the reaction a ubiquinone + NADH + H(+) = a ubiquinol + NAD(+). With respect to regulation, inhibited by HQNO, a quinone derivative. Alternative, nonproton pumping NADH:quinone oxidoreductase that delivers electrons to the respiratory chain by oxidation of NADH and reduction of quinones, and contributes to the regeneration of NAD(+). Can use DMN, a menaquinone analog, 2,3-dimethoxy-5,6-dimethyl-benzoquinone (DDB), an ubiquinone analog, or 2,3,5,6-tetramethyl-1,4-benzoquinone (Duroquinone, DQ) a plastoquinone analog as electron acceptors. The polypeptide is Type II NADH:quinone oxidoreductase (Staphylococcus aureus (strain NCTC 8325 / PS 47)).